The sequence spans 428 residues: Sialidase-3 (428 aa).

Residues 24–27 carry the FRIP motif motif; it reads YRIP. Substrate is bound by residues R25 and R45. D50 acts as the Proton acceptor in catalysis. The stretch at 129-140 is one BNR 1 repeat; that stretch reads ICSQDAGYSWSD. Y179 and Y181 together coordinate substrate. Residues 203–214 form a BNR 2 repeat; it reads IYSDDLGATWHH. The substrate site is built by E225 and R245. Residues 254–265 form a BNR 3 repeat; it reads ALSIDHGECFQK. S314 is subject to Phosphoserine. R341 serves as a coordination point for substrate. Y371 serves as the catalytic Nucleophile. E388 is an active-site residue.

Belongs to the glycosyl hydrolase 33 family. As to quaternary structure, interacts with CAV1; this interaction enhances NEU3 sialidase activity within caveola. Interacts with EGFR; this interaction mediates desialylation of EGFR and enhances downstream signaling. Post-translationally, palmitoylated; may regulate intracellular trafficking and anchorage to plasma membrane and endomembranes. In terms of tissue distribution, expressed in brain.

The protein resides in the cell membrane. Its subcellular location is the membrane. The protein localises to the caveola. It localises to the early endosome membrane. It is found in the recycling endosome membrane. The protein resides in the lysosome membrane. The enzyme catalyses Hydrolysis of alpha-(2-&gt;3)-, alpha-(2-&gt;6)-, alpha-(2-&gt;8)- glycosidic linkages of terminal sialic acid residues in oligosaccharides, glycoproteins, glycolipids, colominic acid and synthetic substrates.. It catalyses the reaction a ganglioside GD1a + H2O = a ganglioside GM1 + N-acetylneuraminate. The catalysed reaction is a ganglioside GD1a (d18:1(4E)) + H2O = a ganglioside GM1 (d18:1(4E)) + N-acetylneuraminate. It carries out the reaction a ganglioside GD1b + H2O = a ganglioside GM1 + N-acetylneuraminate. The enzyme catalyses a ganglioside GD1b (d18:1(4E)) + H2O = a ganglioside GM1 (d18:1(4E)) + N-acetylneuraminate. It catalyses the reaction a ganglioside GD3 + H2O = a ganglioside GM3 + N-acetylneuraminate. The catalysed reaction is a ganglioside GD3 (d18:1(4E)) + H2O = a ganglioside GM3 (d18:1(4E)) + N-acetylneuraminate. It carries out the reaction a ganglioside GM3 + H2O = a beta-D-galactosyl-(1-&gt;4)-beta-D-glucosyl-(1&lt;-&gt;1)-ceramide + N-acetylneuraminate. The enzyme catalyses a ganglioside GM1 + H2O = a ganglioside GA1 + N-acetylneuraminate. It catalyses the reaction a ganglioside GM1 (d18:1(4E)) + H2O = a ganglioside GA1 (d18:1(4E)) + N-acetylneuraminate. The catalysed reaction is a ganglioside GM2 (d18:1(4E)) + H2O = a ganglioside GA2 (d18:1(4E)) + N-acetylneuraminate. It carries out the reaction a ganglioside GM3 (d18:1(4E)) + H2O = a beta-D-Gal-(1-&gt;4)-beta-D-Glc-(1&lt;-&gt;1)-Cer(d18:1(4E)) + N-acetylneuraminate. The enzyme catalyses a ganglioside GT1b + H2O = a ganglioside GD1b + N-acetylneuraminate. In terms of biological role, exo-alpha-sialidase that catalyzes the hydrolytic cleavage of the terminal sialic acid (N-acetylneuraminic acid, Neu5Ac) of a glycan moiety in the catabolism of glycolipids, glycoproteins and oligosacharides. Displays high catalytic efficiency for gangliosides including alpha-(2-&gt;3)-sialylated GD1a and GM3 and alpha-(2-&gt;8)-sialylated GD3. Plays a role in the regulation of transmembrane signaling through the modulation of ganglioside content of the lipid bilayer and by direct interaction with signaling receptors, such as EGFR. Desialylates EGFR and activates downstream signaling in proliferating cells. Contributes to clathrin-mediated endocytosis by regulating sorting of endocytosed receptors to early and recycling endosomes. In Bos taurus (Bovine), this protein is Sialidase-3 (NEU3).